We begin with the raw amino-acid sequence, 1233 residues long: uncharacterized protein (1233 aa).

Disordered stretches follow at residues 1 to 39 (MVES…PSTN), 65 to 116 (QELS…DAIS), 160 to 211 (AEGT…TDLS), 250 to 577 (EKMD…DAPR), 594 to 825 (DLEV…NSEK), 851 to 872 (NKEN…NSEK), and 902 to 955 (EDVE…ENSK). Over residues 72 to 83 (KSSKLKGHKKKN) the composition is skewed to basic residues. Position 180 is a phosphoserine (Ser-180). The span at 183–199 (TRRKKNKKKKTTNRRGR) shows a compositional bias: basic residues. Polar residues predominate over residues 201 to 211 (SSNPADTTDLS). Basic and acidic residues-rich tracts occupy residues 250–280 (EKMD…ETSS) and 287–300 (NEEK…REEN). A compositionally biased stretch (polar residues) spans 329 to 345 (GQASTKDVESESLTKNG). Basic and acidic residues-rich tracts occupy residues 349–370 (KENE…DRDG) and 379–408 (NQKE…ELSV). The segment covering 409 to 422 (NHENNMSHNFNAAG) has biased composition (polar residues). Ser-462 is subject to Phosphoserine. Residues 466–478 (EKEEEEEEEEEEN) show a composition bias toward acidic residues. Basic and acidic residues-rich tracts occupy residues 484–497 (VKKE…EAVR), 508–527 (STSK…EAGE), 594–622 (DLEV…DKIA), 631–672 (EDMK…KTPE), and 684–711 (RPED…DVKP). At Ser-523 the chain carries Phosphoserine. Residues 728 to 739 (QRVQISTEQAET) are compositionally biased toward polar residues. A compositionally biased stretch (basic and acidic residues) spans 753-783 (FKEEEKPKRFEITQEGDKITGKDTNHEHGEA). The segment covering 855–868 (EDVEVDTEEDAEVE) has biased composition (acidic residues). Thr-861 is subject to Phosphothreonine. Basic and acidic residues-rich tracts occupy residues 910–920 (SKEDIETKCSE) and 935–948 (EVSK…TKED). Position 975 is a phosphoserine (Ser-975). Disordered regions lie at residues 984–1071 (LPEL…PKKA) and 1109–1128 (KDST…KPQD). The segment covering 986-999 (ELEKQDIKDNKGED) has biased composition (basic and acidic residues). Ser-1037 and Ser-1046 each carry phosphoserine. 2 stretches are compositionally biased toward basic and acidic residues: residues 1062–1071 (QSTRENPKKA) and 1118–1127 (QSKKNNDKPQ). A Glutaredoxin domain is found at 1132 to 1233 (TSEIRKLNEK…KLRELIYDTI (102 aa)).

This is an uncharacterized protein from Saccharomyces cerevisiae (strain ATCC 204508 / S288c) (Baker's yeast).